A 164-amino-acid chain; its full sequence is uncharacterized protein (164 aa).

2 helical membrane-spanning segments follow: residues 11–31 (FYVN…PSLL) and 51–71 (CQQY…LVLV).

It localises to the membrane. This is an uncharacterized protein from Saccharomyces cerevisiae (strain ATCC 204508 / S288c) (Baker's yeast).